We begin with the raw amino-acid sequence, 760 residues long: MLAELGFIRTIGENDEVPVEPESDSGDEEEEGPIVLGRKQKALQKNRSADFNPDFVFTEKEGMYDGSWALADVMSQLKKKRAATTLDEKIEKVRKRRKAEDKEAKSGKVEEKEGQADSDLKGQENPGEDEAGSKDEDSETDYSSEDEEILTKADTLKVKEKKKKKKGQAAGGFFEDASEYDKSLSFQDMNLSRPLLKAITAMGFKQPTPIQKACIPVGLLGKDICACAATGTGKTAAFALPVLERLIYKPRQAAVTRVLVLVPTRELGIQVHSVTKQLAQFCSITTCLAVGGLDVKSQEAALRAAPDILIATPGRLIDHLHNCPSFHLSSIEVLILDEADRMLDEYFEEQMKEIIRMCSHHRQTMLFSATMTDEVKDLASVSLKNPVRIFVNSNTDVAPFLRQEFIRIRPNREGDREAIVAALLMRTFTDHVMLFTQTKKQAHRMHILLGLLGLQVGELHGNLSQTQRLEALRRFKDEQIDILVATDVAARGLDIEGVKTVINFTMPNTVKHYVHRVGRTARAGRAGRSVSLVGEEERKMLKEIVKAAKAPVKARILPQDVILKFRDKIEKLEKDVYAVLQLEAEEKEMQQSEAQIDTAQRLLAKGKETADQEPERSWFQTKEERKKEKIAKALQEFDLALRGKKKRKKFMKDAKKKGEMTAEERSQFEILKAQMFAERLAKRNRRTKRARAMPEDEPTGPAKKQKQQQKSVFDEELTNTSKKALKQYRAGPSFEERKQSGLPRQRRGNFKSKSRYKRKK.

Residues Met-1–Asp-50 form a disordered region. A compositionally biased stretch (acidic residues) spans Glu-13–Gly-32. Ser-23, Ser-25, and Ser-48 each carry phosphoserine. The Required for interaction with the PEBOW complex signature appears at Phe-55–Phe-57. Positions Lys-80–Ile-149 are disordered. A compositionally biased stretch (basic and acidic residues) spans Lys-98 to Gly-122. Residues Pro-126–Glu-148 show a composition bias toward acidic residues. 2 positions are modified to phosphoserine: Ser-133 and Ser-144. The short motif at Lys-157–Lys-166 is the Nuclear localization signal element. The short motif at Leu-184–Lys-212 is the Q motif element. Positions Ile-215 to Ile-389 constitute a Helicase ATP-binding domain. Ala-228 to Thr-235 contributes to the ATP binding site. A DEAD box motif is present at residues Asp-337 to Asp-340. The 151-residue stretch at Ile-419 to Ile-569 folds into the Helicase C-terminal domain. Disordered stretches follow at residues Lys-605–Glu-624 and Arg-679–Lys-760. 2 stretches are compositionally biased toward basic residues: residues Lys-682–Arg-691 and Arg-744–Lys-760.

This sequence belongs to the DEAD box helicase family. DDX27/DRS1 subfamily. As to quaternary structure, associates with PeBoW complex, composed of BOP1, PES1 and WDR12. Interacts directly with BOP1 and PES1.

The protein resides in the nucleus. Its subcellular location is the nucleolus. The protein localises to the chromosome. The enzyme catalyses ATP + H2O = ADP + phosphate + H(+). Probable ATP-dependent RNA helicase. Component of the nucleolar ribosomal RNA (rRNA) processing machinery that regulates 3' end formation of ribosomal 47S rRNA. This Mus musculus (Mouse) protein is Probable ATP-dependent RNA helicase DDX27 (Ddx27).